A 622-amino-acid chain; its full sequence is Low affinity potassium transport system protein Kup (622 aa).

12 consecutive transmembrane segments (helical) span residues 9–29, 49–69, 103–123, 137–157, 165–185, 213–233, 247–267, 276–296, 337–357, 363–383, 396–416, and 419–439; these read LPAITLAAIGVVYGDIGTSPL, VFGFLSLIFWLLIFVVSIKYL, VIMGLIGGSFFYGEVVITPAI, PQLDTWIVPLSIIVLTLLFMI, VGKLFAPIMLTWFLILAGLGL, VSFIALGAVVLSITGVEALYA, WFTVVLPSLTLNYFGQGALLL, PFFLLAPDWALIPLLIIAALA, IYIPFVNWMLYVAVVIVIVSF, LAAAYGIAVTGTMVLTSILST, FVALILIAFLCVDIPLFTANL, and LLSGGWLPLSLGTVMFIVMTT.

This sequence belongs to the HAK/KUP transporter (TC 2.A.72) family.

The protein localises to the cell inner membrane. It carries out the reaction K(+)(in) + H(+)(in) = K(+)(out) + H(+)(out). Its function is as follows. Responsible for the low-affinity transport of potassium into the cell. Likely operates as a K(+):H(+) symporter. This Shigella boydii serotype 18 (strain CDC 3083-94 / BS512) protein is Low affinity potassium transport system protein Kup.